The primary structure comprises 353 residues: Protein RecA (353 aa).

67-74 contacts ATP; sequence GPESSGKT.

It belongs to the RecA family.

It localises to the cytoplasm. Functionally, can catalyze the hydrolysis of ATP in the presence of single-stranded DNA, the ATP-dependent uptake of single-stranded DNA by duplex DNA, and the ATP-dependent hybridization of homologous single-stranded DNAs. It interacts with LexA causing its activation and leading to its autocatalytic cleavage. This is Protein RecA from Shewanella sediminis (strain HAW-EB3).